The following is a 262-amino-acid chain: Tetrahydromethanopterin S-methyltransferase subunit C (262 aa).

Helical transmembrane passes span 27–47, 72–92, 98–118, 145–165, 173–193, 200–220, and 222–242; these read LVGIYIAHFFPSLAMLLGGLL, PSIGMVSLGMGTISALAGVLI, LPVLVTPILAAVIAVVVGFIV, ALAILGFCTAFAGGFSADIII, VIALAFIAAGMAILHPFNACI, KRTMTLAVACGFMAWLVFAIA, and LDIVSTAVAAIFWFIAYGTFV.

It belongs to the MtrC family. As to quaternary structure, the complex is composed of 8 subunits; MtrA, MtrB, MtrC, MtrD, MtrE, MtrF, MtrG and MtrH.

The protein resides in the cell membrane. It catalyses the reaction 5-methyl-5,6,7,8-tetrahydromethanopterin + coenzyme M + 2 Na(+)(in) = 5,6,7,8-tetrahydromethanopterin + methyl-coenzyme M + 2 Na(+)(out). The protein operates within one-carbon metabolism; methanogenesis from CO(2); methyl-coenzyme M from 5,10-methylene-5,6,7,8-tetrahydromethanopterin: step 2/2. Part of a complex that catalyzes the formation of methyl-coenzyme M and tetrahydromethanopterin from coenzyme M and methyl-tetrahydromethanopterin. This is an energy-conserving, sodium-ion translocating step. The sequence is that of Tetrahydromethanopterin S-methyltransferase subunit C from Methanococcus maripaludis (strain C5 / ATCC BAA-1333).